A 1196-amino-acid polypeptide reads, in one-letter code: MVLSNEPAASAAEEEVEDDALVRASALEAFGESAETRALLRSLPAVHRERASREVAEERFRVIMDKYQEQPHLLDPHLEWMMNSLLDLVQDETSLPDLVHLAFKFLYIITKVRGYKVFLRLFPHEVANVQPVLDMFTGQNPKDHETWETRYMLLLWLSVTCLIPFDFSRLDGNLSTQTGETRVPTMDRILQIAESYLVVSDKARDAAAVLVSKFITRPDVKQRKMASFLDWSLCTLAHSSFQTIEGVITMDGMLQALAQIFKHGKREDCLPYANTVLQCLDGCRLPESSHTSLRKLGVKLVQRLGLTFLKPKVATWRYQRGCRSLAANLKLCAPGKSDQKLLSDSLTSDGDEDYDVPEGVETVIEQLLVGLKDKDTVVRWSAAKGIGRMAGRLPRELADDVVGSVLDCFSFQETDKAWHGGCLALAELGRRGLLLPSRLSEVVTVILKALTYDEKRGACSVGANVRDAACYVCWAFARAYEPQELTPFVTAISSALVIAAVFDRNVNCRRAASAAFQENVGRQGTFPHGIDILTTADYFAVGNISNCFLIISVFIAGFQEYTKPMIDHLVSMKINHWDGAIRELSAKALHNLTPQVPEYIAMHVFPALLLMTQSPDLHTRHGAILACAEVTYALYKLATQSNRLVTDYLDEKAVQSLKQIHQQLCDRHLYRGLGGELMRQAVCILIEKLSLSRMPFKGDATVEGWQWLINDTLRSLHLVSSHSRQQIKEVAVSALTALCSEYYVKEPGEAGSSIAKELIPQYLAELQSPEEMARCGFSSALGALPGFLLRGHLQQVLSGLRRVTCISPNDVSFAEARRDGLKAISRICQTVGVNTRGPPDEVICKENISEVYAALLGCMSDYTTDSRGDVGAWVREAAMTSLMDLMLLLARTEPVLIEAHICERVMCCVAQQASEKIDRFRAHAARVFLTLLHFDSPPIPHVPHRQELESLFPRSDVATVNWNAPSQAFPLITQLLGLPTYRYHVLLGLAVSVGGLTESTVRHSTQSLFEYMKGIQKDAQVLQSFSETLLKVFEDNLLNDRVSVSLLKMLDQLLANGCFDIFTAEENHPFCVKLLTLCKEEIKKSKDIQKLRSSIAVLCGMVQFNGDVRKKILLQLFLLLGHPFPVIRKSTASQVYEMVLTYSDLVDAEVLDEVMSVLSDTAWDAELPVVREQRNRLCDLLGVPRPQLVPKPIPGS.

HEAT repeat units lie at residues 363-401, 599-634, 752-788, and 1106-1142; these read VIEQLLVGLKDKDTVVRWSAAKGIGRMAGRLPRELADDV, YIAMHVFPALLLMTQSPDLHTRHGAILACAEVTYAL, SSIAKELIPQYLAELQSPEEMARCGFSSALGALPGFL, and GDVRKKILLQLFLLLGHPFPVIRKSTASQVYEMVLTY.

Belongs to the TBCD family. In terms of assembly, found in a complex with at least ARL2, PPP2CB, PPP2R1A, PPP2R2A, PPP2R5E and TBCD. Interacts with PPP2CB. Part of a supercomplex made of cofactors A to E. Cofactors A and D function by capturing and stabilizing tubulin in a quasi-native conformation. Cofactor E binds to the cofactor D-tubulin complex; interaction with cofactor C then causes the release of tubulin polypeptides that are committed to the native state. Interacts with ARL2; interaction is enhanced with the GDP-bound form of ARL2. Does not interact with ARL3, ARL4A and ARL4D. Interacts with beta tubulin. Interacts with TBCE.

It localises to the cell junction. It is found in the tight junction. The protein resides in the lateral cell membrane. The protein localises to the cytoplasm. Its subcellular location is the adherens junction. It localises to the cytoskeleton. It is found in the microtubule organizing center. The protein resides in the centrosome. Tubulin-folding protein implicated in the first step of the tubulin folding pathway and required for tubulin complex assembly. Involved in the regulation of microtubule polymerization or depolymerization, it modulates microtubule dynamics by capturing GTP-bound beta-tubulin (TUBB). Its ability to interact with beta tubulin is regulated via its interaction with ARL2. Acts as a GTPase-activating protein (GAP) for ARL2. Induces microtubule disruption in absence of ARL2. Increases degradation of beta tubulin, when overexpressed in polarized cells. Promotes epithelial cell detachment, a process antagonized by ARL2. Induces tight adherens and tight junctions disassembly at the lateral cell membrane. Required for correct assembly and maintenance of the mitotic spindle, and proper progression of mitosis. Involved in neuron morphogenesis. The sequence is that of Tubulin-specific chaperone D (Tbcd) from Mus musculus (Mouse).